The sequence spans 107 residues: Lipid-anchored protein YDL012C (107 aa).

Over residues 1-18 the composition is skewed to polar residues; that stretch reads MSAQDYYGNSASKQSYSR. Residues 1 to 86 form a disordered region; the sequence is MSAQDYYGNS…VQQQPASSGN (86 aa). S2 carries the N-acetylserine modification. Residue K13 forms a Glycyl lysine isopeptide (Lys-Gly) (interchain with G-Cter in ubiquitin) linkage. Positions 35-81 are enriched in low complexity; it reads PSQSQQNYYPPQQQQQQYQQQPQYYQQQQPQYYQQHPQQPIYVQQQP.

It belongs to the CYSTM1 family.

Its subcellular location is the cell membrane. The polypeptide is Lipid-anchored protein YDL012C (Saccharomyces cerevisiae (strain ATCC 204508 / S288c) (Baker's yeast)).